We begin with the raw amino-acid sequence, 376 residues long: ATP phosphoribosyltransferase regulatory subunit (376 aa).

Belongs to the class-II aminoacyl-tRNA synthetase family. HisZ subfamily. Heteromultimer composed of HisG and HisZ subunits.

The protein resides in the cytoplasm. It participates in amino-acid biosynthesis; L-histidine biosynthesis; L-histidine from 5-phospho-alpha-D-ribose 1-diphosphate: step 1/9. In terms of biological role, required for the first step of histidine biosynthesis. May allow the feedback regulation of ATP phosphoribosyltransferase activity by histidine. This Brucella canis (strain ATCC 23365 / NCTC 10854 / RM-666) protein is ATP phosphoribosyltransferase regulatory subunit.